A 180-amino-acid chain; its full sequence is Ferric nitrobindin-like protein (180 aa).

The GXWXGXG signature appears at 21-27 (GRWEGAG).

It belongs to the nitrobindin family.

This is Ferric nitrobindin-like protein from Kineococcus radiotolerans (strain ATCC BAA-149 / DSM 14245 / SRS30216).